The chain runs to 180 residues: Large ribosomal subunit protein uL5 (180 aa).

It belongs to the universal ribosomal protein uL5 family. In terms of assembly, part of the 50S ribosomal subunit; part of the 5S rRNA/L5/L18/L25 subcomplex. Contacts the 5S rRNA and the P site tRNA. Forms a bridge to the 30S subunit in the 70S ribosome.

Its function is as follows. This is one of the proteins that bind and probably mediate the attachment of the 5S RNA into the large ribosomal subunit, where it forms part of the central protuberance. In the 70S ribosome it contacts protein S13 of the 30S subunit (bridge B1b), connecting the 2 subunits; this bridge is implicated in subunit movement. Contacts the P site tRNA; the 5S rRNA and some of its associated proteins might help stabilize positioning of ribosome-bound tRNAs. This is Large ribosomal subunit protein uL5 from Mycoplasma capricolum subsp. capricolum (strain California kid / ATCC 27343 / NCTC 10154).